The chain runs to 496 residues: Tyrosine-protein kinase Srms (496 aa).

Positions 55-116 (PRARLFRALY…PVTYLAKATP (62 aa)) constitute an SH3 domain. The SH2 domain maps to 124 to 216 (WYFSGISRAQ…LIQNPLLQPC (93 aa)). The Protein kinase domain occupies 234-495 (FVLRRKLGEG…AINRRLHLGL (262 aa)). ATP is bound by residues 240–248 (LGEGFFGEV) and K262. The active-site Proton acceptor is the D354. Y384 is modified (phosphotyrosine; by autocatalysis).

Belongs to the protein kinase superfamily. Tyr protein kinase family. SRC subfamily. As to quaternary structure, interacts (via the SH2 and SH3 domains) with DOK1. Interacts with KHDRBS1/SAM68 and VIM. In terms of tissue distribution, higher expression in liver, lung, thymus and skin than in brain, kidney, heart and spleen. In skin, highly expressed in keratinocytes. Abundant in lung, liver, spleen, kidney and testis and is also detected in the cerebrum.

Its subcellular location is the cytoplasm. It catalyses the reaction L-tyrosyl-[protein] + ATP = O-phospho-L-tyrosyl-[protein] + ADP + H(+). Functionally, non-receptor tyrosine-protein kinase which phosphorylates DOK1 on tyrosine residues. Also phosphorylates KHDRBS1/SAM68 and VIM on tyrosine residues. Phosphorylation of KHDRBS1 is EGF-dependent. Phosphorylates OTUB1, promoting deubiquitination of RPTOR. The protein is Tyrosine-protein kinase Srms (Srms) of Mus musculus (Mouse).